The following is a 273-amino-acid chain: NAD kinase (273 aa).

Asp53 serves as the catalytic Proton acceptor. NAD(+) is bound by residues 53-54 (DG), Arg58, 128-129 (NE), Asp157, 168-173 (TAYNFS), and Ala192.

The protein belongs to the NAD kinase family. Requires a divalent metal cation as cofactor.

The protein localises to the cytoplasm. It catalyses the reaction NAD(+) + ATP = ADP + NADP(+) + H(+). Involved in the regulation of the intracellular balance of NAD and NADP, and is a key enzyme in the biosynthesis of NADP. Catalyzes specifically the phosphorylation on 2'-hydroxyl of the adenosine moiety of NAD to yield NADP. This Finegoldia magna (strain ATCC 29328 / DSM 20472 / WAL 2508) (Peptostreptococcus magnus) protein is NAD kinase.